The primary structure comprises 495 residues: Probable cytosol aminopeptidase (495 aa).

Residues lysine 266 and aspartate 271 each coordinate Mn(2+). The active site involves lysine 278. Mn(2+) is bound by residues aspartate 289, aspartate 348, and glutamate 350. Arginine 352 is a catalytic residue.

It belongs to the peptidase M17 family. Requires Mn(2+) as cofactor.

The protein resides in the cytoplasm. The catalysed reaction is Release of an N-terminal amino acid, Xaa-|-Yaa-, in which Xaa is preferably Leu, but may be other amino acids including Pro although not Arg or Lys, and Yaa may be Pro. Amino acid amides and methyl esters are also readily hydrolyzed, but rates on arylamides are exceedingly low.. The enzyme catalyses Release of an N-terminal amino acid, preferentially leucine, but not glutamic or aspartic acids.. Presumably involved in the processing and regular turnover of intracellular proteins. Catalyzes the removal of unsubstituted N-terminal amino acids from various peptides. In Pseudomonas aeruginosa (strain LESB58), this protein is Probable cytosol aminopeptidase.